The following is a 241-amino-acid chain: Eukaryotic translation initiation factor 6 (241 aa).

It belongs to the eIF-6 family. Monomer. Associates with the 60S ribosomal subunit.

It localises to the cytoplasm. Its subcellular location is the nucleus. The protein localises to the nucleolus. Binds to the 60S ribosomal subunit and prevents its association with the 40S ribosomal subunit to form the 80S initiation complex in the cytoplasm. Is also involved in ribosome biogenesis. Associates with pre-60S subunits in the nucleus and is involved in its nuclear export. In Encephalitozoon cuniculi (strain GB-M1) (Microsporidian parasite), this protein is Eukaryotic translation initiation factor 6.